The following is a 514-amino-acid chain: MPPIRQAVSLAEKKAIRDYYNQSAHRIPQKEVTEWFRKTYNKDLSQSTISEILSPKYSYLDDGSVRLGDIKKIRAPKFPLLDNAVYEWLQQREVEGLPISGDMIKQAATRFWSKIPAYASLPLPDFSNGWLDKFRRRHYIQQSAVNQALESIKFEVFREYPVHIQEFIRPYAQKDIFCVGGTSLFWKLTPNKQNLDYQEIQGMKRGKAKVSLIMCCNADGSERLPLWIVGYAQNPRSFEQCGIFPKSMNFEWKWNGRASISPIIMEEWLRWFDTRMQGRKVLLMLESNDTYQFGVESVRRFKGGFQNTSVFRIPEKTLDIKSPFEQGIVDTFKANYRRYWLQYSLNQINILRDPLKAVNVLKAIRWMLWSWNFGVSEKTIQASFLRSGLLGPHSEAEGQGMESYQKAIMEIGNLISSKGSEAVKQINEYIRPSEEDETKLHQDAVDTVAAEFLEERRFESDEEEDVEPQISNVEAAMAFEVLIKYFEQHENGDPSFVLDLYRRQRVIAPNNLIA.

The HTH CENPB-type domain occupies 69-144; that stretch reads DIKKIRAPKF…RRRHYIQQSA (76 aa).

The protein resides in the nucleus. The protein localises to the chromosome. It localises to the centromere. Its function is as follows. Binds to centromeric K-type repeat DNA and ARS3002 DNA. The CBH-binding consensus sequence is Py-Pu-A-T-A-T-Py-Pu-T-A. The polypeptide is CENP-B homolog protein 1 (cbh1) (Schizosaccharomyces pombe (strain 972 / ATCC 24843) (Fission yeast)).